The primary structure comprises 431 residues: MRLLFSFCFFFFMIIFTATAYDPLDPSGNITIKWDIMSWTADGYVATVTMNNFQIYRHIQNPGWTLGWTWAKKEVIWSMVGAQTTEQGDCSKFKGNVPHCCKKTPTVVDLLPGVPYNQQFSNCCKGGVIGAWGQDPSAAVSQFQVSAGLAGTTNKTVKLPKNFTLLGPGPGYTCGPAKIVPSTVFLTTDKRRKTQALMTWNVTCTYSQFLARKHPSCCVSFSSFYNDTITPCPSCACGCENKKSCVKADSKILTKKGLNTPKKDNTPLLQCTHHMCPVRVHWHVKTNYKDYWRVKIAITNFNYRMNHTLWTLAIQHPNLNNVTQVFSFDYKPVSPYGSINDTGMFYGTKFYNDLLMEAGPSGNVQSEVLLQKDQKTFTFKQGWAFPRKVYFNGDECMLPPPDSYPFLPNSAQGNFASFSLTILLLLFISIW.

The N-terminal stretch at 1–20 is a signal peptide; sequence MRLLFSFCFFFFMIIFTATA. N29, N154, N162, N201, N226, N306, N321, and N340 each carry an N-linked (GlcNAc...) asparagine glycan. N414 carries GPI-anchor amidated asparagine lipidation. Residues 415–431 constitute a propeptide, removed in mature form; that stretch reads FASFSLTILLLLFISIW.

It belongs to the COBRA family. In terms of tissue distribution, expressed in roots, stems, leaves, flowers and siliques.

The protein localises to the cell membrane. This chain is COBRA-like protein 4 (COBL4), found in Arabidopsis thaliana (Mouse-ear cress).